The sequence spans 551 residues: MPKYVFVTGGVVSSVGKGITTAAIGRLLKSRGLRVALMKLDPYLNVDPGTMSPYQHGEVFVTEDGAETDLDLGHYERFTDENLSRASNVTTGQVYSAVIAKERRGDYLGGTVQVIPHITNEIKARIRQVAELHRPDVIVVEVGGTVGDIEGQPFLEAIRQMRREEGRRNVLYIHVTFLPYIASTGEVKTKPTQHSVKELRAIGIQPDVIICRTDHPVGDDVRAKVALFGDVDEDAVILLPTAETIYEVPLMLERAGLGRYVMEHLGWDDRDPDLADWERMVERLKSPRRRLRIALVGKYVELHDAYLSVVEALRHAGLAHDVAVEIVWVNSTAERSEIEAALRHVNGIVVPGGFGPRGVEGKMLAARYARERGIPYLGLCYGLHMAVIEFARNVLGLCGANSTEIDPETPHPVIDLMPDQRGVEMGGTMRLGRYPCQLVPGTKAALAYGESLVYERHRHRWEVNNAYREAFEAAGFVVSGQSPDGRYVEIMELHDHPWFVGVQFHPEFKSRPNRPHPLFVAFIGVAKHVLREGEQRPLPLAEPVAMPAADD.

An amidoligase domain region spans residues 1–267 (MPKYVFVTGG…GRYVMEHLGW (267 aa)). A CTP-binding site is contributed by serine 13. Residue serine 13 participates in UTP binding. Residue 14-19 (SVGKGI) participates in ATP binding. Tyrosine 54 serves as a coordination point for L-glutamine. Position 71 (aspartate 71) interacts with ATP. Residues aspartate 71 and glutamate 141 each contribute to the Mg(2+) site. CTP is bound by residues 148 to 150 (DIE), 188 to 193 (KTKPTQ), and lysine 224. UTP-binding positions include 188-193 (KTKPTQ) and lysine 224. The Glutamine amidotransferase type-1 domain maps to 292-532 (RIALVGKYVE…IGVAKHVLRE (241 aa)). Glycine 353 serves as a coordination point for L-glutamine. Catalysis depends on cysteine 380, which acts as the Nucleophile; for glutamine hydrolysis. L-glutamine contacts are provided by residues 381 to 384 (YGLH), glutamate 404, and arginine 460. Residues histidine 505 and glutamate 507 contribute to the active site.

This sequence belongs to the CTP synthase family. Homotetramer.

It carries out the reaction UTP + L-glutamine + ATP + H2O = CTP + L-glutamate + ADP + phosphate + 2 H(+). The enzyme catalyses L-glutamine + H2O = L-glutamate + NH4(+). The catalysed reaction is UTP + NH4(+) + ATP = CTP + ADP + phosphate + 2 H(+). It functions in the pathway pyrimidine metabolism; CTP biosynthesis via de novo pathway; CTP from UDP: step 2/2. Allosterically activated by GTP, when glutamine is the substrate; GTP has no effect on the reaction when ammonia is the substrate. The allosteric effector GTP functions by stabilizing the protein conformation that binds the tetrahedral intermediate(s) formed during glutamine hydrolysis. Inhibited by the product CTP, via allosteric rather than competitive inhibition. Its function is as follows. Catalyzes the ATP-dependent amination of UTP to CTP with either L-glutamine or ammonia as the source of nitrogen. Regulates intracellular CTP levels through interactions with the four ribonucleotide triphosphates. The polypeptide is CTP synthase (Thermomicrobium roseum (strain ATCC 27502 / DSM 5159 / P-2)).